The following is a 418-amino-acid chain: UDP-N-acetylglucosamine 1-carboxyvinyltransferase (418 aa).

Phosphoenolpyruvate is bound at residue 22-23 (KN). Arg92 is a binding site for UDP-N-acetyl-alpha-D-glucosamine. Residue Cys116 is the Proton donor of the active site. Cys116 is modified (2-(S-cysteinyl)pyruvic acid O-phosphothioketal). Residues 121 to 125 (RPIDL), Asp305, and Leu327 contribute to the UDP-N-acetyl-alpha-D-glucosamine site.

The protein belongs to the EPSP synthase family. MurA subfamily.

The protein localises to the cytoplasm. It carries out the reaction phosphoenolpyruvate + UDP-N-acetyl-alpha-D-glucosamine = UDP-N-acetyl-3-O-(1-carboxyvinyl)-alpha-D-glucosamine + phosphate. It participates in cell wall biogenesis; peptidoglycan biosynthesis. Cell wall formation. Adds enolpyruvyl to UDP-N-acetylglucosamine. The sequence is that of UDP-N-acetylglucosamine 1-carboxyvinyltransferase from Campylobacter jejuni subsp. jejuni serotype O:6 (strain 81116 / NCTC 11828).